The chain runs to 332 residues: Holliday junction branch migration complex subunit RuvB (332 aa).

A large ATPase domain (RuvB-L) region spans residues 1 to 181 (MARILDNDVM…FGITGHMEYY (181 aa)). Residues Leu-20, Arg-21, Gly-62, Lys-65, Thr-66, Thr-67, 128–130 (EDF), Arg-171, Tyr-181, and Arg-218 contribute to the ATP site. Residue Thr-66 participates in Mg(2+) binding. The segment at 182 to 252 (QEKDLTEIVE…ITDRALTMLD (71 aa)) is small ATPAse domain (RuvB-S). The head domain (RuvB-H) stretch occupies residues 255–332 (REGLDYIDQK…RHLGYPYQNT (78 aa)). DNA contacts are provided by Arg-291, Arg-310, Arg-312, and Arg-315.

Belongs to the RuvB family. In terms of assembly, homohexamer. Forms an RuvA(8)-RuvB(12)-Holliday junction (HJ) complex. HJ DNA is sandwiched between 2 RuvA tetramers; dsDNA enters through RuvA and exits via RuvB. An RuvB hexamer assembles on each DNA strand where it exits the tetramer. Each RuvB hexamer is contacted by two RuvA subunits (via domain III) on 2 adjacent RuvB subunits; this complex drives branch migration. In the full resolvosome a probable DNA-RuvA(4)-RuvB(12)-RuvC(2) complex forms which resolves the HJ.

It is found in the cytoplasm. The catalysed reaction is ATP + H2O = ADP + phosphate + H(+). Its function is as follows. The RuvA-RuvB-RuvC complex processes Holliday junction (HJ) DNA during genetic recombination and DNA repair, while the RuvA-RuvB complex plays an important role in the rescue of blocked DNA replication forks via replication fork reversal (RFR). RuvA specifically binds to HJ cruciform DNA, conferring on it an open structure. The RuvB hexamer acts as an ATP-dependent pump, pulling dsDNA into and through the RuvAB complex. RuvB forms 2 homohexamers on either side of HJ DNA bound by 1 or 2 RuvA tetramers; 4 subunits per hexamer contact DNA at a time. Coordinated motions by a converter formed by DNA-disengaged RuvB subunits stimulates ATP hydrolysis and nucleotide exchange. Immobilization of the converter enables RuvB to convert the ATP-contained energy into a lever motion, pulling 2 nucleotides of DNA out of the RuvA tetramer per ATP hydrolyzed, thus driving DNA branch migration. The RuvB motors rotate together with the DNA substrate, which together with the progressing nucleotide cycle form the mechanistic basis for DNA recombination by continuous HJ branch migration. Branch migration allows RuvC to scan DNA until it finds its consensus sequence, where it cleaves and resolves cruciform DNA. The chain is Holliday junction branch migration complex subunit RuvB from Streptococcus pyogenes serotype M12 (strain MGAS9429).